We begin with the raw amino-acid sequence, 293 residues long: MHGLIADFIHYLDVERGLARTTQVSYQQDLTTFMAWLSDQKQTTFPEDFGVIQAFLKHQNDTKAPASVSRMISALRKFYRFLLREGAIKSDPMTKIDTPKKAQHLPATLSGTEIDALMAKPDTTKPLGLRDRAIFELMYATGLRVSEVVGLRLDQLHLAMNLLQVTGKGDKERLVPISPQAADWVNRYLQESRPRLIKHQQPKAVFVNFHGHALTRQVIWKNLKAYIASVGIEKDVTPHTLRHSFATRLLENGADLRVVQELLGHSDISTTQIYTHLSNQHLVAVYHKTHPRG.

One can recognise a Core-binding (CB) domain in the interval 1-83; it reads MHGLIADFIH…ALRKFYRFLL (83 aa). The 184-residue stretch at 104 to 287 folds into the Tyr recombinase domain; it reads HLPATLSGTE…SNQHLVAVYH (184 aa). Catalysis depends on residues Arg-144, Lys-168, His-239, Arg-242, and His-265. The O-(3'-phospho-DNA)-tyrosine intermediate role is filled by Tyr-274.

This sequence belongs to the 'phage' integrase family. XerD subfamily. In terms of assembly, forms a cyclic heterotetrameric complex composed of two molecules of XerC and two molecules of XerD.

It is found in the cytoplasm. Site-specific tyrosine recombinase, which acts by catalyzing the cutting and rejoining of the recombining DNA molecules. The XerC-XerD complex is essential to convert dimers of the bacterial chromosome into monomers to permit their segregation at cell division. It also contributes to the segregational stability of plasmids. The chain is Tyrosine recombinase XerD from Lacticaseibacillus casei (Lactobacillus casei).